The sequence spans 1513 residues: MAERANLVFQNKEIDGTAMKRLISRLIDHFGMGYTSHILDQIKTLGFHQATTTSISLGIEDLLTIPSKGWLVQDAEQQSFLLEKHYYYGAVHAVEKLRQSVEIWYATSEYLKHEMNSNFRITDPSNPVYLMSFSGARGNASQVHQLVGMRGLMADPQGQMIDLPIQSNLREGLSLTEYIISCYGARKGVVDTAVRTADAGYLTRRLVEVVQHIIVRRRDCGTIQAISVSPQNGMTEKLFVQTLIGRVLANDIYIGSRCIATRNQDIGIGLVNRFITTFRAQPFRAQPIYIRTPFTCRSTSWICQLCYGRSSTHGDLVELGEAVGVIAGQSIGEPGTQLTLRTFHTGGVFTGGTADLVRSPSNGKIQFNGDLVHPTRTRHGQPAFLCYIDLHITIQSQDILHSVTIPSKSLILVQNDQYVESEQVIAEIRAGTSALHFKEKVQKHIYSESDGEMHWSTDVYHAPEYQYGNLRRLPKTSHLWILSVSMCRSSIASFSLHKDQDQMNTYSFSVDGRYIFGLSMADDEVRHRLLDTFGKKDREILDYSTPDRIMSNGHWNFVYPSILQNNFDLLAKKRRNRFAIPLQYHQEQEKEPISCFGISIEIPFMGVLRRNTIVAYFDDPRYKKDKKGSGIVKFRYRTLEDEYRTREKDSENEYGSPENEYRTREEECKTLEDEYRTREEEYETLEDEYGIPENEYETLEDEYGILEDEYRTREEESEDEYGSPENKYRPREDKYGTLEEDSEDEHGTLEEDSEEDSEDEYGNPEEDSVLKKGVLIEHRGTKEFSLKYQKEVDRFFFILQELHILPRSSSLKVLDNSIIGVDTQLTKNTRSRLGGLVRVKRKKSHTELKIFSGDIHFPEEADKILGGSLIPLEREKKDSKESKKRENWVYVQWKKILKSKEKYFVLVRPAVAYEMNEGRNLATLFPQDLLQEEGNLQLRLVNFISHENSKLTQRIYHTNSQFVRTCLVLNWEQEEKEEARASLVEIRANGLIRDFLRIGLIKSTISYTRKRYDSRSAGLILHNRLDRTNTNSFYSKAKIQSLSQHQEAIGTLLNRNKEYQSLMVLSASNCSRIGFFKNSKNPNGVKESNPRIPIPKFWGLFRNFSGLLGTIAPSISNFSSSYYLLTYNQILLKKHLLLDNLKQNFKVLQGLKHSLINENQRTSNFDSNIMLDPFQLNWHFLPHDSWEETSAKIHLGQFICENVCLFKSHIKKSGQIFIVNIDSFVIRAAKPYLATTGATVHGHYGEILYKGDRLVTFIYEKARSSDITQGLPKVEQIFEARSIDSLSPNLERRIEDWNERIPRILGGPWGFLIGAELTIAQSRISLVNKIQKVYRSQGVQIHNRHIEIIIRQVTSKVRVSEDGMSNVFSPGELIGLLRAERAGRALDESIYYRAILLGITRVSLNTQSFISEASFQETARVLAKAALRGRIDWLKGLKENVVLGGIIPVGTGFQKFVHRYPQNKNLYFEIQKKKLFASEMRDILFLHTELVSSDSDVTNNFYETSESPFTPFI.

Zn(2+) contacts are provided by C220, C296, C303, and C306. The segment at R644–V769 is disordered. The segment covering N659–E679 has biased composition (basic and acidic residues). Residues E680 to E707 show a composition bias toward acidic residues. The span at N726 to T737 shows a compositional bias: basic and acidic residues. Over residues L738–D767 the composition is skewed to acidic residues.

This sequence belongs to the RNA polymerase beta' chain family. RpoC2 subfamily. As to quaternary structure, in plastids the minimal PEP RNA polymerase catalytic core is composed of four subunits: alpha, beta, beta', and beta''. When a (nuclear-encoded) sigma factor is associated with the core the holoenzyme is formed, which can initiate transcription. Zn(2+) serves as cofactor.

The protein localises to the plastid. The protein resides in the chloroplast. It catalyses the reaction RNA(n) + a ribonucleoside 5'-triphosphate = RNA(n+1) + diphosphate. Functionally, DNA-dependent RNA polymerase catalyzes the transcription of DNA into RNA using the four ribonucleoside triphosphates as substrates. The sequence is that of DNA-directed RNA polymerase subunit beta'' from Oryza sativa (Rice).